The chain runs to 627 residues: tRNA uridine 5-carboxymethylaminomethyl modification enzyme MnmG (627 aa).

FAD-binding positions include 13–18, V125, and S180; that span reads GGGHAG. Residue 274-288 coordinates NAD(+); it reads GPRYCPSIEDKVVRF. FAD is bound at residue Q371.

It belongs to the MnmG family. In terms of assembly, homodimer. Heterotetramer of two MnmE and two MnmG subunits. FAD is required as a cofactor.

The protein resides in the cytoplasm. Its function is as follows. NAD-binding protein involved in the addition of a carboxymethylaminomethyl (cmnm) group at the wobble position (U34) of certain tRNAs, forming tRNA-cmnm(5)s(2)U34. The protein is tRNA uridine 5-carboxymethylaminomethyl modification enzyme MnmG of Francisella tularensis subsp. tularensis (strain WY96-3418).